A 232-amino-acid chain; its full sequence is tRNA (guanine-N(7)-)-methyltransferase (232 aa).

Residues Glu38, Asp63, Glu90, and Asp113 each contribute to the S-adenosyl-L-methionine site. Asp113 is an active-site residue. Lys117 and Asp149 together coordinate substrate.

The protein belongs to the class I-like SAM-binding methyltransferase superfamily. TrmB family.

The catalysed reaction is guanosine(46) in tRNA + S-adenosyl-L-methionine = N(7)-methylguanosine(46) in tRNA + S-adenosyl-L-homocysteine. It participates in tRNA modification; N(7)-methylguanine-tRNA biosynthesis. Functionally, catalyzes the formation of N(7)-methylguanine at position 46 (m7G46) in tRNA. In Syntrophotalea carbinolica (strain DSM 2380 / NBRC 103641 / GraBd1) (Pelobacter carbinolicus), this protein is tRNA (guanine-N(7)-)-methyltransferase.